The sequence spans 510 residues: GMP synthase [glutamine-hydrolyzing] (510 aa).

The Glutamine amidotransferase type-1 domain maps to Leu-5–Asp-195. Cys-82 functions as the Nucleophile in the catalytic mechanism. Active-site residues include His-169 and Glu-171. Residues Trp-196–Arg-385 form the GMPS ATP-PPase domain. An ATP-binding site is contributed by Ser-223–Ser-229.

In terms of assembly, homodimer.

It carries out the reaction XMP + L-glutamine + ATP + H2O = GMP + L-glutamate + AMP + diphosphate + 2 H(+). It functions in the pathway purine metabolism; GMP biosynthesis; GMP from XMP (L-Gln route): step 1/1. In terms of biological role, catalyzes the synthesis of GMP from XMP. The polypeptide is GMP synthase [glutamine-hydrolyzing] (Clostridium botulinum (strain ATCC 19397 / Type A)).